Reading from the N-terminus, the 360-residue chain is Phospho-N-acetylmuramoyl-pentapeptide-transferase (360 aa).

Helical transmembrane passes span 27–47 (IVSL…LIAW), 72–92 (PTMG…MWAY), 94–114 (SNPY…VGFI), 132–152 (WKYF…FAVG), 168–188 (IMPQ…VGTS), 199–219 (GLAI…AWAT), 235–255 (FAGE…GFLW), 263–283 (VFMG…IAVL), 288–308 (FLLL…ILQV), and 338–358 (VIVR…ATLK).

Belongs to the glycosyltransferase 4 family. MraY subfamily. The cofactor is Mg(2+).

The protein resides in the cell inner membrane. The enzyme catalyses UDP-N-acetyl-alpha-D-muramoyl-L-alanyl-gamma-D-glutamyl-meso-2,6-diaminopimeloyl-D-alanyl-D-alanine + di-trans,octa-cis-undecaprenyl phosphate = di-trans,octa-cis-undecaprenyl diphospho-N-acetyl-alpha-D-muramoyl-L-alanyl-D-glutamyl-meso-2,6-diaminopimeloyl-D-alanyl-D-alanine + UMP. The protein operates within cell wall biogenesis; peptidoglycan biosynthesis. Catalyzes the initial step of the lipid cycle reactions in the biosynthesis of the cell wall peptidoglycan: transfers peptidoglycan precursor phospho-MurNAc-pentapeptide from UDP-MurNAc-pentapeptide onto the lipid carrier undecaprenyl phosphate, yielding undecaprenyl-pyrophosphoryl-MurNAc-pentapeptide, known as lipid I. This chain is Phospho-N-acetylmuramoyl-pentapeptide-transferase, found in Sodalis glossinidius (strain morsitans).